The primary structure comprises 790 residues: MAKKNTVTGSKIKRKRQDESPEVSESEEIDVQGLIDDEASEDSEDEVESEDQVFENSDADSDEELNNLIGEEEDVSDVDSEDFSDELQDDSNSITDKLTNVRIRTSSQSSNENVHGLFADGTERIIKPEIEPVYDSDDSDHENFNTIGNIPLSAYEEMPHIGYDINGKRIMRPAKGSALDQLLESIDLPEGWTGLLDQNTGSSLKLTDEELELIRKIQHNENTDDNINPYEPTIEWFTSKTEVMPLTAVPEPKRRFVPSKHEAKRIMKIVRAIRDGRIVPPEKRKEQQDEEQYNFDLWDDNTDEPNEHIMNLRAPKLPPPTNEESYNPPEEYLMTEEERKKWEETDPSERETNFIPQKYGSLRKVPAYQENLRERFERSLDLYLAPRVRHNKLNIDPDSLIPDLPSPKDLRPFPIKCSTIFQGHIGRVRTLSIDPSGLWLATGGDDGTVRVWEILTGRQVYHCDVVDKKKDDDNIDSLEWNPDASVGILAVAAGESVYLLVPTILGYEIENAGRSKIEVGWGYDTYGNKNKRGDLNVNGEEDNESGANEVKKEVTKWLTPMEGQSQQGIAAIIQCRKAVKNLSWHRKGDYFVTVSPDSGNTSVLIHQLSKHLSQSPFRKSKGIIVDAKFHPFKPQLFVASQRSIKIYDLSQQVLTKKLMPGARYLSGIDIHPRGDHLLASSYDKRVLWHDLDLSNTPYKTLRYHEKAVRNIKFHKGRLPLFASASDDGSVHVFHGTVYDDLMTNPLLVPLKKLTGHKVVHSLGVLDLVWHPKEAWLFTAGADGTARLWTT.

The segment at M1 to S93 is disordered. Acidic residues predominate over residues S20–D89. The interval R255–N371 is required for interaction with NOP7. A required for interaction with YTM1 region spans residues N371–P407. 7 WD repeats span residues G423–H462, K470–E510, Q574–P616, K619–K657, P660–K699, Y703–T743, and V759–T790.

Belongs to the WD repeat BOP1/ERB1 family. Component of the NOP7 complex, composed of ERB1, NOP7 and YTM1. The complex is held together by ERB1, which interacts with NOP7 via its N-terminal domain and with YTM1 via a high-affinity interaction between the seven-bladed beta-propeller domains of the 2 proteins. The NOP7 complex associates with the 66S pre-ribosome.

The protein localises to the nucleus. The protein resides in the nucleolus. It localises to the nucleoplasm. Component of the NOP7 complex, which is required for maturation of the 25S and 5.8S ribosomal RNAs and formation of the 60S ribosome. The sequence is that of Ribosome biogenesis protein ERB1 from Meyerozyma guilliermondii (strain ATCC 6260 / CBS 566 / DSM 6381 / JCM 1539 / NBRC 10279 / NRRL Y-324) (Yeast).